A 438-amino-acid polypeptide reads, in one-letter code: Glutamyl-tRNA reductase (438 aa).

Substrate is bound by residues 49–52 (TCNR), S109, 114–116 (EGQ), and Q120. The active-site Nucleophile is the C50. An NADP(+)-binding site is contributed by 198–203 (GAGRMS).

Belongs to the glutamyl-tRNA reductase family. As to quaternary structure, homodimer.

It carries out the reaction (S)-4-amino-5-oxopentanoate + tRNA(Glu) + NADP(+) = L-glutamyl-tRNA(Glu) + NADPH + H(+). It participates in porphyrin-containing compound metabolism; protoporphyrin-IX biosynthesis; 5-aminolevulinate from L-glutamyl-tRNA(Glu): step 1/2. Its pathway is porphyrin-containing compound metabolism; chlorophyll biosynthesis. Its function is as follows. Catalyzes the NADPH-dependent reduction of glutamyl-tRNA(Glu) to glutamate 1-semialdehyde (GSA). This is Glutamyl-tRNA reductase from Synechococcus sp. (strain WH7803).